Consider the following 80-residue polypeptide: UPF0270 protein ASA_3305 (80 aa).

The protein belongs to the UPF0270 family.

The protein is UPF0270 protein ASA_3305 of Aeromonas salmonicida (strain A449).